The chain runs to 144 residues: Maximins 7/H13 (144 aa).

A signal peptide spans 1-18; the sequence is MNFKYIVAVSFLIASAYA. The propeptide occupies 19-43; that stretch reads RSEENDEQSLSQRDVLEEESLREIR. Asn-70 carries the post-translational modification Asparagine amide. Positions 74 to 123 are excised as a propeptide; that stretch reads TAEDHEVMKRLEAVMRDLDSLDYPEEAAERETRGFNQEEIANLFTKKEKR. Leu-143 is subject to Leucine amide.

Belongs to the bombinin family. Expressed by the skin glands.

It is found in the secreted. Maximin-7 shows antimicrobial activity against bacteria and against the fungus C.albicans. It has little hemolytic activity. In terms of biological role, maximin-H13 shows antimicrobial activity against bacteria and against the fungus C.albicans. Shows strong hemolytic activity. This is Maximins 7/H13 from Bombina maxima (Giant fire-bellied toad).